A 169-amino-acid polypeptide reads, in one-letter code: Ribosome maturation factor RimM (169 aa).

A PRC barrel domain is found at 97–169 (NDEAYFTDLI…KIVVDWEYDY (73 aa)).

Belongs to the RimM family. In terms of assembly, binds ribosomal protein uS19.

It localises to the cytoplasm. In terms of biological role, an accessory protein needed during the final step in the assembly of 30S ribosomal subunit, possibly for assembly of the head region. Essential for efficient processing of 16S rRNA. May be needed both before and after RbfA during the maturation of 16S rRNA. It has affinity for free ribosomal 30S subunits but not for 70S ribosomes. The chain is Ribosome maturation factor RimM from Francisella philomiragia subsp. philomiragia (strain ATCC 25017 / CCUG 19701 / FSC 153 / O#319-036).